A 600-amino-acid chain; its full sequence is UvrABC system protein C (600 aa).

The region spanning 15 to 92 (DKPGCYLMKD…IKKYQPYYNV (78 aa)) is the GIY-YIG domain. A UVR domain is found at 197–232 (AQVKQDLTEKMTQASMDLEFERAAEIRDQLKYIEQT).

This sequence belongs to the UvrC family. Interacts with UvrB in an incision complex.

The protein resides in the cytoplasm. In terms of biological role, the UvrABC repair system catalyzes the recognition and processing of DNA lesions. UvrC both incises the 5' and 3' sides of the lesion. The N-terminal half is responsible for the 3' incision and the C-terminal half is responsible for the 5' incision. This Lactobacillus johnsonii (strain CNCM I-12250 / La1 / NCC 533) protein is UvrABC system protein C.